The primary structure comprises 67 residues: Alpha-like toxin Lqh3 (67 aa).

In terms of domain architecture, LCN-type CS-alpha/beta spans 2–66; that stretch reads RDGYIAQPEN…GIIVEGEKCH (65 aa). 4 disulfides stabilise this stretch: Cys12–Cys65, Cys16–Cys37, Cys23–Cys47, and Cys27–Cys49. Ser67 is modified (serine amide).

This sequence belongs to the long (4 C-C) scorpion toxin superfamily. Sodium channel inhibitor family. Alpha subfamily. Monomer. Expressed by the venom gland.

Its subcellular location is the secreted. Alpha toxins bind voltage-independently at site-3 of sodium channels (Nav) and inhibit the inactivation of the activated channels, thereby blocking neuronal transmission. The dissociation is voltage-dependent. This alpha-like toxin is highly toxic to insects and competes with LqhaIT on binding to insect sodium channels. Differs from classical anti-mammalian alpha-toxins as it inhibits sodium channel inactivation in cell bodies of hippocampus brain neurons, on which the anti-mammalian Lqh2 is inactive, and is unable to affect Nav1.2 in the rat brain, on which Lqh2 is highly active. Moreover, its pharmacological properties are unique in that its binding affinity for insect channels drops &gt;30-fold at pH 8.5 versus pH 6.5, and its rate of association with receptor site-3 on both insect and mammalian sodium channels is 4-15-fold slower compared with LqhaIT and Lqh2. This Leiurus hebraeus (Hebrew deathstalker scorpion) protein is Alpha-like toxin Lqh3.